The chain runs to 98 residues: MAQLYDWLVETPANAEDLESRINTRPAHLEHNKPLIEAGTLVWGGPSLAAHPKAAGEDLAIVGSVMCIRAGSEEEVREMIRNDPYAKLGQVSIRMSVK.

The protein belongs to the YciI family.

Its pathway is secondary metabolite biosynthesis. In terms of biological role, part of the gene cluster that mediates the biosynthesis of the antibiotic 2,4-dihydroxy-3-methyl-6-(2-oxopropyl)benzaldehyde (DHMBA) and its derivatives. The direct non-reducing polyketide synthase dbaI product is 2,4-dihydroxy-3-methyl-6-(2-oxopropyl)benzaldehyde (DHMBA), produced by condensation of one acetyl-CoA starter unit with 4 malonyl-CoA units and one methylation step. The FAD-dependent monooxygenase dbaH is responsible for the synthesis of yellow pigments derived from the oxidation of DHMBA. The roles of dbaB, C, E and F have still to be determined. The sequence is that of Derivative of benzaldehyde biosynthesis cluster protein C from Emericella nidulans (strain FGSC A4 / ATCC 38163 / CBS 112.46 / NRRL 194 / M139) (Aspergillus nidulans).